Consider the following 499-residue polypeptide: Potassium channel subfamily K member 5 (499 aa).

Residues 1 to 7 (MVDRGPL) lie on the Cytoplasmic side of the membrane. Residues 8–26 (LTSAIIFYLAIGAAIFEVL) traverse the membrane as a helical segment. N-linked (GlcNAc...) asparagine glycosylation is present at asparagine 77. The pore-forming intramembrane region spans 85–112 (WPNAMIFAATVITTIGYGNVAPKTPAGR). K(+) is bound by residues threonine 98, isoleucine 99, glycine 100, and tyrosine 101. The tract at residues 98-103 (TIGYGN) is selectivity filter 1. Residues 113 to 133 (LFCVFYGLFGVPLCLTWISAL) form a helical membrane-spanning segment. At 134-157 (GKFFGGRAKRLGQFLTKRGVSLRK) the chain is on the cytoplasmic side. Residues 158 to 180 (AQITCTVIFIVWGVLVHLVIPPF) traverse the membrane as a helical segment. The pore-forming intramembrane region spans 190–215 (YIEGLYYSFITISTIGFGDFVAGVNP). Residues threonine 203, isoleucine 204, glycine 205, and phenylalanine 206 each contribute to the K(+) site. Residues 203–208 (TIGFGD) form a selectivity filter 2 region. A helical membrane pass occupies residues 230–250 (WIYLGLAWLSLFVNWKVSMFV). Residues 251-325 (EVHKAIKKRR…SGGGETGPGP (75 aa)) are Cytoplasmic-facing. Disordered stretches follow at residues 312-335 (AMKT…GGLP), 360-388 (QTLR…SPAP), and 428-499 (GLSD…PKGT). Positions 316–334 (SGGGETGPGPGLGPQGGGL) are enriched in gly residues. Over residues 370 to 382 (RSPDEEAVARAPE) the composition is skewed to basic and acidic residues. Serine 371 carries the phosphoserine modification. A compositionally biased stretch (low complexity) spans 466–480 (SSSESTFTSTESELS).

It belongs to the two pore domain potassium channel (TC 1.A.1.8) family. Homodimer; disulfide-linked. Heterodimer with KCNK16 and KCNK17. Abundant expression in kidney, also detected in liver, placenta and small intestine. In the kidney, expression is restricted to the distal tubules and collecting ducts. Not expressed in proximal tubules or glomeruli. Expressed in pancreas, in both endocrine (alpha, beta, gamma, delta, and epsilon) and exocrine (acinar and ductal) cells.

It localises to the membrane. It carries out the reaction K(+)(in) = K(+)(out). The channel conductance is stimulated by extracellular alkaline pH. Inhibited by quinine, quinidine and external acidification. In terms of biological role, k(+) channel that conducts voltage-dependent outward rectifying currents upon membrane depolarization. Voltage sensing is coupled to K(+) electrochemical gradient in an 'ion flux gating' mode where outward but not inward ion flow opens the gate. Homo- and heterodimerizes to form functional channels with distinct regulatory and gating properties. The polypeptide is Potassium channel subfamily K member 5 (Homo sapiens (Human)).